A 184-amino-acid polypeptide reads, in one-letter code: ATP synthase subunit b 1 (184 aa).

Residues 4 to 24 (LSILAVLAASPAMAATGPFLS) traverse the membrane as a helical segment.

The protein belongs to the ATPase B chain family. F-type ATPases have 2 components, F(1) - the catalytic core - and F(0) - the membrane proton channel. F(1) has five subunits: alpha(3), beta(3), gamma(1), delta(1), epsilon(1). F(0) has three main subunits: a(1), b(2) and c(10-14). The alpha and beta chains form an alternating ring which encloses part of the gamma chain. F(1) is attached to F(0) by a central stalk formed by the gamma and epsilon chains, while a peripheral stalk is formed by the delta and b chains.

The protein localises to the cell inner membrane. F(1)F(0) ATP synthase produces ATP from ADP in the presence of a proton or sodium gradient. F-type ATPases consist of two structural domains, F(1) containing the extramembraneous catalytic core and F(0) containing the membrane proton channel, linked together by a central stalk and a peripheral stalk. During catalysis, ATP synthesis in the catalytic domain of F(1) is coupled via a rotary mechanism of the central stalk subunits to proton translocation. Functionally, component of the F(0) channel, it forms part of the peripheral stalk, linking F(1) to F(0). The sequence is that of ATP synthase subunit b 1 from Cereibacter sphaeroides (strain ATCC 17029 / ATH 2.4.9) (Rhodobacter sphaeroides).